The sequence spans 150 residues: Large ribosomal subunit protein uL11 (150 aa).

It belongs to the universal ribosomal protein uL11 family. As to quaternary structure, part of the ribosomal stalk of the 50S ribosomal subunit. Interacts with L10 and the large rRNA to form the base of the stalk. L10 forms an elongated spine to which L12 dimers bind in a sequential fashion forming a multimeric L10(L12)X complex. One or more lysine residues are methylated.

In terms of biological role, forms part of the ribosomal stalk which helps the ribosome interact with GTP-bound translation factors. This is Large ribosomal subunit protein uL11 from Cereibacter sphaeroides (strain KD131 / KCTC 12085) (Rhodobacter sphaeroides).